Consider the following 137-residue polypeptide: uncharacterized protein (137 aa).

Belongs to the ycf72 family.

It localises to the plastid. The protein localises to the chloroplast. This is an uncharacterized protein from Oryza nivara (Indian wild rice).